Here is a 479-residue protein sequence, read N- to C-terminus: Probable acyl-CoA desaturase (479 aa).

The span at 1–18 (MTAPSATAFSSATTQPTT) shows a compositional bias: low complexity. The interval 1–28 (MTAPSATAFSSATTQPTTEGNASMRKRT) is disordered. Topologically, residues 1 to 61 (MTAPSATAFS…PWTMQNWWRH (61 aa)) are cytoplasmic. Residues 62–82 (LNWLHCMLIFGLPMIAIYGVF) form a helical membrane-spanning segment. Over 83-89 (TTPLQTK) the chain is Lumenal. The helical transmembrane segment at 90 to 110 (TLIFAIIYYAYSGLGITAGYH) threads the bilayer. Fe cation-binding residues include histidine 110, histidine 115, histidine 147, histidine 150, and histidine 151. The Histidine box-1 motif lies at 110–115 (HRLWSH). Topologically, residues 111-204 (RLWSHRAYKA…DPFVMFNHRH (94 aa)) are cytoplasmic. A Histidine box-2 motif is present at residues 147–151 (HRAHH). Residues 205–225 (FLPIASFMAFIFPSLFCGLLW) form a helical membrane-spanning segment. The Lumenal portion of the chain corresponds to 226 to 229 (GDYR). Residues 230-250 (GGYFYAGVCRLVFVHHATFCV) form a helical membrane-spanning segment. The Cytoplasmic portion of the chain corresponds to 251 to 479 (NSLAHLIGSQ…QPPIEAAAAN (229 aa)). Histidine 255, histidine 284, histidine 287, and histidine 288 together coordinate Fe cation. The short motif at 284 to 288 (HNYHH) is the Histidine box-3 element. In terms of domain architecture, Cytochrome b5 heme-binding spans 357 to 433 (QLPVMEFEDF…LSTYRVAVVR (77 aa)). Heme is bound by residues histidine 390 and histidine 416.

Belongs to the fatty acid desaturase type 1 family. Fe(2+) serves as cofactor.

It localises to the membrane. The catalysed reaction is octadecanoyl-CoA + 2 Fe(II)-[cytochrome b5] + O2 + 2 H(+) = (9Z)-octadecenoyl-CoA + 2 Fe(III)-[cytochrome b5] + 2 H2O. Stearoyl-CoA desaturase that utilizes O(2) and electrons from reduced cytochrome b5 to introduce the first double bond into saturated fatty acyl-CoA substrates. Catalyzes the insertion of a cis double bond at the delta-9 position into fatty acyl-CoA substrates including palmitoyl-CoA and stearoyl-CoA. Contributes to the biosynthesis of membrane phospholipids, cholesterol esters and triglycerides. This is Probable acyl-CoA desaturase from Schizosaccharomyces pombe (strain 972 / ATCC 24843) (Fission yeast).